Consider the following 702-residue polypeptide: Glucosidase 2 subunit beta (702 aa).

Residues Met-1–Ser-20 form the signal peptide. Residue Asn-145 is glycosylated (N-linked (GlcNAc...) asparagine). Residues Ser-163–Ser-228 adopt a coiled-coil conformation. N-linked (GlcNAc...) asparagine glycosylation is found at Asn-240 and Asn-358. Residues Pro-435–Ser-457 form a disordered region. The stretch at Lys-478–Glu-517 forms a coiled coil. N-linked (GlcNAc...) asparagine glycans are attached at residues Asn-520 and Asn-525. An MRH domain is found at Ser-537 to Lys-689. Cystine bridges form between Cys-539–Cys-552, Cys-646–Cys-675, and Cys-660–Cys-687. Residues Asn-688 and Asn-699 are each glycosylated (N-linked (GlcNAc...) asparagine).

As to quaternary structure, heterodimer of a catalytic subunit alpha (ROT2) and a subunit beta (GTB1).

The protein localises to the endoplasmic reticulum. Functionally, subunit of glucosidase 2, which cleaves sequentially the 2 innermost alpha-1,3-linked glucose residues from the Glc(2)Man(9)GlcNAc(2) oligosaccharide precursor of immature glycoproteins. Specifically required for the cleavage of the final glucose. The protein is Glucosidase 2 subunit beta (GTB1) of Saccharomyces cerevisiae (strain ATCC 204508 / S288c) (Baker's yeast).